The sequence spans 223 residues: Large ribosomal subunit protein uL6c (223 aa).

The transit peptide at 1–41 directs the protein to the chloroplast; the sequence is MASSLVSSFQPRSAFLGDRNVFKVSSTPFAQVGYSSKTIEC.

The protein belongs to the universal ribosomal protein uL6 family. As to quaternary structure, part of the 50S ribosomal subunit.

The protein localises to the plastid. It localises to the chloroplast. In terms of biological role, this protein binds directly to 23S ribosomal RNA and is located at the aminoacyl-tRNA binding site of the peptidyltransferase center. The chain is Large ribosomal subunit protein uL6c (RPL6) from Arabidopsis thaliana (Mouse-ear cress).